The primary structure comprises 163 residues: 2-C-methyl-D-erythritol 2,4-cyclodiphosphate synthase (163 aa).

The a divalent metal cation site is built by Asp9 and His11. 4-CDP-2-C-methyl-D-erythritol 2-phosphate is bound by residues 9–11 (DVH) and 36–37 (HS). His44 is an a divalent metal cation binding site. 4-CDP-2-C-methyl-D-erythritol 2-phosphate is bound by residues 58–60 (DIG), 63–67 (FPDDD), 134–137 (TTSE), Phe141, and Arg144.

This sequence belongs to the IspF family. As to quaternary structure, homotrimer. A divalent metal cation serves as cofactor.

It carries out the reaction 4-CDP-2-C-methyl-D-erythritol 2-phosphate = 2-C-methyl-D-erythritol 2,4-cyclic diphosphate + CMP. Its pathway is isoprenoid biosynthesis; isopentenyl diphosphate biosynthesis via DXP pathway; isopentenyl diphosphate from 1-deoxy-D-xylulose 5-phosphate: step 4/6. Functionally, involved in the biosynthesis of isopentenyl diphosphate (IPP) and dimethylallyl diphosphate (DMAPP), two major building blocks of isoprenoid compounds. Catalyzes the conversion of 4-diphosphocytidyl-2-C-methyl-D-erythritol 2-phosphate (CDP-ME2P) to 2-C-methyl-D-erythritol 2,4-cyclodiphosphate (ME-CPP) with a corresponding release of cytidine 5-monophosphate (CMP). This is 2-C-methyl-D-erythritol 2,4-cyclodiphosphate synthase from Halorhodospira halophila (strain DSM 244 / SL1) (Ectothiorhodospira halophila (strain DSM 244 / SL1)).